The sequence spans 79 residues: Small ribosomal subunit protein uS17 (79 aa).

This sequence belongs to the universal ribosomal protein uS17 family. As to quaternary structure, part of the 30S ribosomal subunit.

Its function is as follows. One of the primary rRNA binding proteins, it binds specifically to the 5'-end of 16S ribosomal RNA. The polypeptide is Small ribosomal subunit protein uS17 (Orientia tsutsugamushi (strain Ikeda) (Rickettsia tsutsugamushi)).